A 587-amino-acid polypeptide reads, in one-letter code: Bifunctional dihydrofolate reductase-thymidylate synthase (587 aa).

The 229-residue stretch at 9–237 (DIYAICACCK…TTLDFIIYSK (229 aa)) folds into the DHFR domain. 36-42 (GIGNAGV) is a binding site for NADP(+). Position 51 (Asp51) interacts with substrate. NADP(+)-binding positions include 108–110 (KKS) and 129–132 (LSRT). Substrate is bound by residues Ile173, Tyr179, and Thr194. 174–181 (GGSSVYKE) is an NADP(+) binding site. The interval 301 to 587 (NHPEYQYLNI…HDKINMDMAA (287 aa)) is thymidylate synthase. Arg324 is a dUMP binding site. Cys469 is an active-site residue. DUMP is bound by residues His470, 488 to 492 (QRSCD), Asn500, and 530 to 532 (HVY).

The protein in the N-terminal section; belongs to the dihydrofolate reductase family. This sequence in the C-terminal section; belongs to the thymidylate synthase family. In terms of assembly, homodimer.

It carries out the reaction (6S)-5,6,7,8-tetrahydrofolate + NADP(+) = 7,8-dihydrofolate + NADPH + H(+). The catalysed reaction is dUMP + (6R)-5,10-methylene-5,6,7,8-tetrahydrofolate = 7,8-dihydrofolate + dTMP. It participates in cofactor biosynthesis; tetrahydrofolate biosynthesis; 5,6,7,8-tetrahydrofolate from 7,8-dihydrofolate: step 1/1. Its function is as follows. Bifunctional enzyme. Involved in de novo dTMP biosynthesis. Key enzyme in folate metabolism. Catalyzes an essential reaction for de novo glycine and purine synthesis, DNA precursor synthesis, and for the conversion of dUMP to dTMP. In Plasmodium berghei (strain Anka), this protein is Bifunctional dihydrofolate reductase-thymidylate synthase.